The primary structure comprises 361 residues: tRNA N6-adenosine threonylcarbamoyltransferase (361 aa).

Fe cation contacts are provided by histidine 110 and histidine 114. Residues 132–136, aspartate 165, glycine 178, aspartate 182, and asparagine 284 each bind substrate; that span reads LVSGG. Fe cation is bound at residue aspartate 312.

It belongs to the KAE1 / TsaD family. Requires Fe(2+) as cofactor.

It is found in the cytoplasm. The enzyme catalyses L-threonylcarbamoyladenylate + adenosine(37) in tRNA = N(6)-L-threonylcarbamoyladenosine(37) in tRNA + AMP + H(+). In terms of biological role, required for the formation of a threonylcarbamoyl group on adenosine at position 37 (t(6)A37) in tRNAs that read codons beginning with adenine. Is involved in the transfer of the threonylcarbamoyl moiety of threonylcarbamoyl-AMP (TC-AMP) to the N6 group of A37, together with TsaE and TsaB. TsaD likely plays a direct catalytic role in this reaction. The chain is tRNA N6-adenosine threonylcarbamoyltransferase from Desulfovibrio desulfuricans (strain ATCC 27774 / DSM 6949 / MB).